A 157-amino-acid chain; its full sequence is Putative electron transport protein YsaA (157 aa).

4 consecutive 4Fe-4S ferredoxin-type domains span residues Asn2–Cys32, Lys48–Gly80, Gly80–Ser109, and Lys112–Val144. [4Fe-4S] cluster-binding residues include Cys12, Cys15, Cys18, Cys22, Cys58, Cys61, Cys66, Cys70, Cys89, Cys92, Cys95, Cys99, Cys118, Cys121, Cys130, and Cys134.

This chain is Putative electron transport protein YsaA (ysaA), found in Escherichia coli (strain K12).